A 601-amino-acid polypeptide reads, in one-letter code: Zinc finger CCCH domain-containing protein 33 (601 aa).

ANK repeat units follow at residues 71 to 101 and 106 to 138; these read ERRTAAMVAALYGSTGVLGYVVAAAPAEAAR and DGATPLHMAAAGGAANAVAATRLLLAAGASVDA. Positions 167–180 are enriched in low complexity; that stretch reads PAVSPSSSPKKSAS. Residues 167–203 form a disordered region; that stretch reads PAVSPSSSPKKSASPPSPPPPQEAKKEYPPDLTLPDL. C3H1-type zinc fingers lie at residues 252 to 280 and 288 to 312; these read SYSCVPCPEFRKGGSCRKGDACEYAHGVF and QYRTRLCKDEVGCARRICFFAHKPD.

This Oryza sativa subsp. japonica (Rice) protein is Zinc finger CCCH domain-containing protein 33.